Here is a 396-residue protein sequence, read N- to C-terminus: MAKLDFDRSKEHVNIGTIGHVDHGKTTLTAAIATVLSKKGLAEAKDYASIDAAPEEKARGITINTAHIEYETEKRHYAHVDCPGHADYVKNMITGAAQMDGGILVVSATDGPMPQTREHILLSKQVGVPKMVVFLNKVDMLEGEDEMIELVELEIRSLLSEYGFDGDKTPIIKGSALKALEGNPQYEKNIEELMDAVDNYIETPVKELDKPFLLAVEDVFTITGRGTVATGKVERGQLNINSEVEIVGFTEKPKKTTVTGIEMFRKNLKEAQAGDNAGLLLRGVDRNDVERGQVLAKPGSIVPHSKFEAAIYALKKEEGGRHTPFFSNYKPQFYFRTTDVTGGVVFPAGREMVMPGDNVDLVVELISPIAVEEGTKFSIREGGRTVGAGSVTKILK.

One can recognise a tr-type G domain in the interval 10–205 (KEHVNIGTIG…AVDNYIETPV (196 aa)). Residues 19–26 (GHVDHGKT) are G1. 19–26 (GHVDHGKT) is a GTP binding site. Residue Thr26 coordinates Mg(2+). Residues 60 to 64 (GITIN) form a G2 region. The segment at 81–84 (DCPG) is G3. GTP contacts are provided by residues 81 to 85 (DCPGH) and 136 to 139 (NKVD). A G4 region spans residues 136-139 (NKVD). The segment at 175–177 (SAL) is G5.

Belongs to the TRAFAC class translation factor GTPase superfamily. Classic translation factor GTPase family. EF-Tu/EF-1A subfamily. In terms of assembly, monomer.

Its subcellular location is the cytoplasm. The enzyme catalyses GTP + H2O = GDP + phosphate + H(+). In terms of biological role, GTP hydrolase that promotes the GTP-dependent binding of aminoacyl-tRNA to the A-site of ribosomes during protein biosynthesis. In Mycoplasmopsis pulmonis (strain UAB CTIP) (Mycoplasma pulmonis), this protein is Elongation factor Tu.